The following is a 396-amino-acid chain: Elongation factor Tu (396 aa).

The tr-type G domain maps to 10–205; it reads KPHVNIGTIG…ACDDSIPDPE (196 aa). The tract at residues 19–26 is G1; the sequence is GHVDHGKT. 19–26 contacts GTP; the sequence is GHVDHGKT. Thr26 provides a ligand contact to Mg(2+). The tract at residues 62-66 is G2; that stretch reads GITIN. The tract at residues 83-86 is G3; that stretch reads DAPG. GTP contacts are provided by residues 83 to 87 and 138 to 141; these read DAPGH and NKCD. The interval 138–141 is G4; it reads NKCD. Positions 175–177 are G5; sequence SAL.

It belongs to the TRAFAC class translation factor GTPase superfamily. Classic translation factor GTPase family. EF-Tu/EF-1A subfamily. As to quaternary structure, monomer.

Its subcellular location is the cytoplasm. It catalyses the reaction GTP + H2O = GDP + phosphate + H(+). In terms of biological role, GTP hydrolase that promotes the GTP-dependent binding of aminoacyl-tRNA to the A-site of ribosomes during protein biosynthesis. The polypeptide is Elongation factor Tu (Corynebacterium diphtheriae (strain ATCC 700971 / NCTC 13129 / Biotype gravis)).